Here is a 282-residue protein sequence, read N- to C-terminus: Shikimate dehydrogenase (NADP(+)) (282 aa).

Shikimate-binding positions include 15-17 (SKS) and T62. Catalysis depends on K66, which acts as the Proton acceptor. Residues N87 and D103 each contribute to the shikimate site. Residues 127–131 (GAGGA), 151–156 (NRTHTK), and M220 contribute to the NADP(+) site. Residue Y222 coordinates shikimate. G244 provides a ligand contact to NADP(+).

It belongs to the shikimate dehydrogenase family. As to quaternary structure, homodimer.

The enzyme catalyses shikimate + NADP(+) = 3-dehydroshikimate + NADPH + H(+). Its pathway is metabolic intermediate biosynthesis; chorismate biosynthesis; chorismate from D-erythrose 4-phosphate and phosphoenolpyruvate: step 4/7. Functionally, involved in the biosynthesis of the chorismate, which leads to the biosynthesis of aromatic amino acids. Catalyzes the reversible NADPH linked reduction of 3-dehydroshikimate (DHSA) to yield shikimate (SA). This Shewanella baltica (strain OS155 / ATCC BAA-1091) protein is Shikimate dehydrogenase (NADP(+)).